Here is a 688-residue protein sequence, read N- to C-terminus: Elongation factor G (688 aa).

A tr-type G domain is found at 8 to 282; that stretch reads EKTRNIGIMA…AIIDYLPSPM (275 aa). GTP contacts are provided by residues 17 to 24, 81 to 85, and 135 to 138; these read AHIDAGKT, DTPGH, and NKMD.

Belongs to the TRAFAC class translation factor GTPase superfamily. Classic translation factor GTPase family. EF-G/EF-2 subfamily.

The protein resides in the cytoplasm. Functionally, catalyzes the GTP-dependent ribosomal translocation step during translation elongation. During this step, the ribosome changes from the pre-translocational (PRE) to the post-translocational (POST) state as the newly formed A-site-bound peptidyl-tRNA and P-site-bound deacylated tRNA move to the P and E sites, respectively. Catalyzes the coordinated movement of the two tRNA molecules, the mRNA and conformational changes in the ribosome. The chain is Elongation factor G (fusA) from Apple proliferation phytoplasma.